Here is a 741-residue protein sequence, read N- to C-terminus: Phosphoribosylformylglycinamidine synthase subunit PurL (741 aa).

His-53 is a catalytic residue. ATP-binding residues include Tyr-56 and Lys-95. A Mg(2+)-binding site is contributed by Glu-97. Substrate contacts are provided by residues 98–101 and Arg-120; that span reads SHNH. His-99 serves as the catalytic Proton acceptor. Asp-121 contacts Mg(2+). Gln-244 lines the substrate pocket. Asp-274 contacts Mg(2+). 318-320 is a substrate binding site; that stretch reads ESQ. The ATP site is built by Asp-501 and Gly-538. A Mg(2+)-binding site is contributed by Asn-539. Residue Ser-541 participates in substrate binding.

The protein belongs to the FGAMS family. Monomer. Part of the FGAM synthase complex composed of 1 PurL, 1 PurQ and 2 PurS subunits.

The protein resides in the cytoplasm. It catalyses the reaction N(2)-formyl-N(1)-(5-phospho-beta-D-ribosyl)glycinamide + L-glutamine + ATP + H2O = 2-formamido-N(1)-(5-O-phospho-beta-D-ribosyl)acetamidine + L-glutamate + ADP + phosphate + H(+). It participates in purine metabolism; IMP biosynthesis via de novo pathway; 5-amino-1-(5-phospho-D-ribosyl)imidazole from N(2)-formyl-N(1)-(5-phospho-D-ribosyl)glycinamide: step 1/2. In terms of biological role, part of the phosphoribosylformylglycinamidine synthase complex involved in the purines biosynthetic pathway. Catalyzes the ATP-dependent conversion of formylglycinamide ribonucleotide (FGAR) and glutamine to yield formylglycinamidine ribonucleotide (FGAM) and glutamate. The FGAM synthase complex is composed of three subunits. PurQ produces an ammonia molecule by converting glutamine to glutamate. PurL transfers the ammonia molecule to FGAR to form FGAM in an ATP-dependent manner. PurS interacts with PurQ and PurL and is thought to assist in the transfer of the ammonia molecule from PurQ to PurL. This is Phosphoribosylformylglycinamidine synthase subunit PurL from Limosilactobacillus fermentum (strain NBRC 3956 / LMG 18251) (Lactobacillus fermentum).